The chain runs to 927 residues: BTB/POZ domain-containing protein KCTD19 (927 aa).

Positions 18 to 72 (NVGGWHFSVPRSKLAQFPDSLLWKEASALTSSENQRLFIDRDGSTFRHVHYYLYT) constitute a BTB 1 domain. Serine 270 carries the post-translational modification Phosphoserine. Residues 399–486 (IKLYVGSHWY…YHIPALSEAL (88 aa)) form the BTB 2 domain. The disordered stretch occupies residues 664–760 (VEEASLHVPS…NANGTDNPGA (97 aa)). Basic and acidic residues predominate over residues 731–743 (DWGKQRPKDRESP).

In terms of assembly, identified in a complex with ZNF541, HDAC1 and HSPA2. Identified in a complex with ZNF541 and HDAC1. Identified in a complex with HDAC1, HDAC2, DNTTIP1 and ZNF541. In terms of tissue distribution, detected in adult testis.

It localises to the nucleus. Transcription regulator which is essential for male fertility and for the completion of meiotic prophase in spermatocytes. Regulates progression of the pachytene stage of meiotic prophase and promotes the transcriptional activation activity ZNF541. Required for the organization of chromosomes during metaphase I. The polypeptide is BTB/POZ domain-containing protein KCTD19 (Kctd19) (Mus musculus (Mouse)).